We begin with the raw amino-acid sequence, 359 residues long: Guanine nucleotide-binding protein G(q) subunit alpha (359 aa).

S-palmitoyl cysteine attachment occurs at residues cysteine 9 and cysteine 10. In terms of domain architecture, G-alpha spans 38 to 359; it reads RELKLLLLGT…QLNLKEYNLV (322 aa). The segment at 41–54 is G1 motif; the sequence is KLLLLGTGESGKST. Serine 50, glycine 51, lysine 52, serine 53, threonine 54, serine 156, leucine 180, arginine 181, and arginine 183 together coordinate GTP. Serine 53 provides a ligand contact to Mg(2+). The G2 motif stretch occupies residues 178–186; sequence DVLRVRVPT. Threonine 186 is a binding site for Mg(2+). Residues 201-210 are G3 motif; it reads FRMVDVGGQR. The residue at position 209 (glutamine 209) is a 5-glutamyl histamine. The segment at 270-277 is G4 motif; the sequence is ILFLNKKD. GTP-binding residues include asparagine 274, lysine 275, aspartate 277, and alanine 331. The tract at residues 329–334 is G5 motif; the sequence is TCATDT.

It belongs to the G-alpha family. G(q) subfamily. G proteins are composed of 3 units; alpha, beta and gamma. The alpha chain contains the guanine nucleotide binding site. Interacts (GDP-bound form) with RIC8A (via C-terminus); promoting GNAQ folding and association with the plasma membrane. Binds NHERF1. Forms a complex with PECAM1 and BDKRB2. Interacts with GAS2L2. In terms of processing, palmitoylated by ZDHHC3 and ZDHHC7. Palmitoylation occurs in the Golgi and participates in the localization of GNAQ to the plasma membrane. Histaminylated at Gln-209 residues by TGM2.

It is found in the cell membrane. The protein localises to the golgi apparatus. It localises to the nucleus. Its subcellular location is the nucleus membrane. The catalysed reaction is GTP + H2O = GDP + phosphate + H(+). In terms of biological role, guanine nucleotide-binding proteins (G proteins) function as transducers downstream of G protein-coupled receptors (GPCRs) in numerous signaling cascades. The alpha chain contains the guanine nucleotide binding site and alternates between an active, GTP-bound state and an inactive, GDP-bound state. Signaling by an activated GPCR promotes GDP release and GTP binding. The alpha subunit has a low GTPase activity that converts bound GTP to GDP, thereby terminating the signal. Both GDP release and GTP hydrolysis are modulated by numerous regulatory proteins. Signaling is mediated via phospholipase C-beta-dependent inositol lipid hydrolysis for signal propagation: activates phospholipase C-beta: following GPCR activation, GNAQ activates PLC-beta (PLCB1, PLCB2, PLCB3 or PLCB4), leading to production of diacylglycerol (DAG) and inositol 1,4,5-trisphosphate (IP3). Required for platelet activation. Regulates B-cell selection and survival and is required to prevent B-cell-dependent autoimmunity. Regulates chemotaxis of BM-derived neutrophils and dendritic cells (in vitro). Transduces FFAR4 signaling in response to long-chain fatty acids (LCFAs). Together with GNA11, required for heart development. The protein is Guanine nucleotide-binding protein G(q) subunit alpha (GNAQ) of Canis lupus familiaris (Dog).